We begin with the raw amino-acid sequence, 122 residues long: MARIAGVNIPTNKRVLIALQYIHGIGQKSAREIITKVGIEDARRVNQLTDAEVLQIRETIDRDYTVEGDLRRENSMNIKRLMDLACYRGLRHRKGLPVRGQRTHTNARTRKGPAKPIAGKKK.

The disordered stretch occupies residues 95–122 (GLPVRGQRTHTNARTRKGPAKPIAGKKK).

The protein belongs to the universal ribosomal protein uS13 family. As to quaternary structure, part of the 30S ribosomal subunit. Forms a loose heterodimer with protein S19. Forms two bridges to the 50S subunit in the 70S ribosome.

Functionally, located at the top of the head of the 30S subunit, it contacts several helices of the 16S rRNA. In the 70S ribosome it contacts the 23S rRNA (bridge B1a) and protein L5 of the 50S subunit (bridge B1b), connecting the 2 subunits; these bridges are implicated in subunit movement. Contacts the tRNAs in the A and P-sites. The protein is Small ribosomal subunit protein uS13 of Caulobacter vibrioides (strain ATCC 19089 / CIP 103742 / CB 15) (Caulobacter crescentus).